The following is a 178-amino-acid chain: Translation initiation factor IF-3 (178 aa).

The protein belongs to the IF-3 family. In terms of assembly, monomer.

It is found in the cytoplasm. IF-3 binds to the 30S ribosomal subunit and shifts the equilibrium between 70S ribosomes and their 50S and 30S subunits in favor of the free subunits, thus enhancing the availability of 30S subunits on which protein synthesis initiation begins. The protein is Translation initiation factor IF-3 of Picosynechococcus sp. (strain ATCC 27264 / PCC 7002 / PR-6) (Agmenellum quadruplicatum).